Here is a 145-residue protein sequence, read N- to C-terminus: MKKSAYSEQREMIVAEAINPIATELRLLDPADLISLLRFECYGSIADLVSSAAELYYHPGTINFGAGGEYKLEWEGVPEIVLDLELKPKGATVYARLILADRHAAVEINHVSFQNPSENPDENTEFLQRSLTAARFVASRQGEAA.

It to R.meliloti R00649.

This is an uncharacterized protein from Agrobacterium fabrum (strain C58 / ATCC 33970) (Agrobacterium tumefaciens (strain C58)).